Reading from the N-terminus, the 464-residue chain is NADH-quinone oxidoreductase subunit N 2 (464 aa).

A run of 14 helical transmembrane segments spans residues 12–32 (VGII…LIGF), 33–53 (LGFL…LAGY), 62–82 (INAF…FVIF), 93–113 (TFVE…IMVS), 117–137 (LAVI…SVGM), 152–172 (LVLG…YIGA), 189–209 (FALA…AAPF), 227–247 (FIST…ASYI), 254–274 (FSYI…LVAY), 282–304 (MLAY…YNPL), 310–330 (IFYV…LSIL), 351–371 (PFLA…PPFA), 400–420 (IIAA…EPAT), and 434–454 (IGIS…NILF).

Belongs to the complex I subunit 2 family. NDH-1 is composed of 14 different subunits. Subunits NuoA, H, J, K, L, M, N constitute the membrane sector of the complex.

The protein resides in the cell inner membrane. The enzyme catalyses a quinone + NADH + 5 H(+)(in) = a quinol + NAD(+) + 4 H(+)(out). Functionally, NDH-1 shuttles electrons from NADH, via FMN and iron-sulfur (Fe-S) centers, to quinones in the respiratory chain. The immediate electron acceptor for the enzyme in this species is believed to be ubiquinone. Couples the redox reaction to proton translocation (for every two electrons transferred, four hydrogen ions are translocated across the cytoplasmic membrane), and thus conserves the redox energy in a proton gradient. This Hydrogenobaculum sp. (strain Y04AAS1) protein is NADH-quinone oxidoreductase subunit N 2.